A 385-amino-acid polypeptide reads, in one-letter code: MGSHQERPLIGLLFSETGVTADIERSQRYGALLAVEQLNREGGVGGRPIETLSQDPGGDPDRYRLCAEDFIRNRGVRFLVGCYMSHTRKAVMPVVERADALLCYPTPYEGFEYSPNIVYGGPAPNQNSAPLAAYLIRHYGERVVFIGSDYIYPRESNHVMRHLYRQHGGTVLEEIYIPLYPSDDDVQRAVERIYQARADVVFSTVVGTGTAELYRAIARRYGDGRRPPIASLTTSEAEVAKMESDVAEGQVVVAPYFSSIDTAASRAFVQACHGFFPENATITAWAEAAYWQTLLLGRAAQAAGSWRVEDVQRHLYDICIDAPQGPVRVERQNNHSRLSSRIAEIDARGVFQVRWQSPEPIRPDPYVVVHNLDDWSASMGGGALP.

As to quaternary structure, homodimer. Forms a complex with AmiR.

Its function is as follows. Negatively regulates the expression of the aliphatic amidase operon. AmiC functions by inhibiting the action of AmiR at the protein level. It exhibits protein kinase activity. The polypeptide is Aliphatic amidase expression-regulating protein (amiC) (Pseudomonas aeruginosa (strain ATCC 15692 / DSM 22644 / CIP 104116 / JCM 14847 / LMG 12228 / 1C / PRS 101 / PAO1)).